A 152-amino-acid chain; its full sequence is Nucleoside diphosphate kinase B (152 aa).

The segment at 1-66 is interaction with AKAP13; the sequence is MANLERTFIA…DRPFFPGLVK (66 aa). Residues lysine 12, phenylalanine 60, arginine 88, threonine 94, arginine 105, and asparagine 115 each coordinate ATP. Histidine 118 functions as the Pros-phosphohistidine intermediate in the catalytic mechanism.

It belongs to the NDK family. As to quaternary structure, hexamer of two different chains: An and B (A6, A5B, A4B2, A3B3, A2B4, AB5, B6). Interacts with CAPN8. Interacts with AKAP13. Interacts with ITGB1BP1 (via C-terminal domain region). Interacts with BCL2L10. Mg(2+) is required as a cofactor. In terms of processing, the N-terminus is blocked.

Its subcellular location is the cytoplasm. The protein resides in the cell projection. It localises to the lamellipodium. It is found in the ruffle. The protein localises to the nucleus. The enzyme catalyses a 2'-deoxyribonucleoside 5'-diphosphate + ATP = a 2'-deoxyribonucleoside 5'-triphosphate + ADP. The catalysed reaction is a ribonucleoside 5'-diphosphate + ATP = a ribonucleoside 5'-triphosphate + ADP. It catalyses the reaction ATP + protein L-histidine = ADP + protein N-phospho-L-histidine.. In terms of biological role, major role in the synthesis of nucleoside triphosphates other than ATP. The ATP gamma phosphate is transferred to the NDP beta phosphate via a ping-pong mechanism, using a phosphorylated active-site intermediate. Negatively regulates Rho activity by interacting with AKAP13/LBC. Acts as a transcriptional activator of the MYC gene; binds DNA non-specifically. Binds to both single-stranded guanine- and cytosine-rich strands within the nuclease hypersensitive element (NHE) III(1) region of the MYC gene promoter. Does not bind to duplex NHE III(1). Has G-quadruplex (G4) DNA-binding activity, which is independent of its nucleotide-binding and kinase activity. Binds both folded and unfolded G4 with similar low nanomolar affinities. Stabilizes folded G4s regardless of whether they are prefolded or not. Exhibits histidine protein kinase activity. The chain is Nucleoside diphosphate kinase B (Nme2) from Rattus norvegicus (Rat).